Consider the following 370-residue polypeptide: Chaperone protein DnaJ (370 aa).

A J domain is found at D4 to G68. The CR-type zinc-finger motif lies at G133–Q211. 8 residues coordinate Zn(2+): C146, C149, C163, C166, C185, C188, C199, and C202. CXXCXGXG motif repeat units lie at residues C146–G153, C163–G170, C185–G192, and C199–G206.

Belongs to the DnaJ family. As to quaternary structure, homodimer. Zn(2+) is required as a cofactor.

The protein resides in the cytoplasm. Its function is as follows. Participates actively in the response to hyperosmotic and heat shock by preventing the aggregation of stress-denatured proteins and by disaggregating proteins, also in an autonomous, DnaK-independent fashion. Unfolded proteins bind initially to DnaJ; upon interaction with the DnaJ-bound protein, DnaK hydrolyzes its bound ATP, resulting in the formation of a stable complex. GrpE releases ADP from DnaK; ATP binding to DnaK triggers the release of the substrate protein, thus completing the reaction cycle. Several rounds of ATP-dependent interactions between DnaJ, DnaK and GrpE are required for fully efficient folding. Also involved, together with DnaK and GrpE, in the DNA replication of plasmids through activation of initiation proteins. The polypeptide is Chaperone protein DnaJ (Rickettsia typhi (strain ATCC VR-144 / Wilmington)).